The following is a 157-amino-acid chain: UPF0262 protein Rleg2_0240 (157 aa).

It belongs to the UPF0262 family.

The protein is UPF0262 protein Rleg2_0240 of Rhizobium leguminosarum bv. trifolii (strain WSM2304).